Reading from the N-terminus, the 1033-residue chain is Tyrosine-protein kinase-like otk (1033 aa).

A signal peptide spans 1–22 (MTARMISICGLVMALMMASVLA). Over 23 to 581 (SSSRFQRVPQ…GGDGFLVTRA (559 aa)) the chain is Extracellular. Ig-like C2-type domains are found at residues 25–114 (SRFQ…AKLS), 113–199 (LSVI…RVMS), 251–365 (PEDL…APIN), 368–463 (PGIL…VAIN), and 468–558 (PKFS…VQLV). A glycan (N-linked (GlcNAc...) asparagine) is linked at asparagine 39. 4 disulfide bridges follow: cysteine 46/cysteine 95, cysteine 137/cysteine 188, cysteine 276/cysteine 354, and cysteine 399/cysteine 447. Asparagine 336, asparagine 417, asparagine 429, asparagine 444, asparagine 457, asparagine 512, and asparagine 524 each carry an N-linked (GlcNAc...) asparagine glycan. Cysteine 490 and cysteine 542 are disulfide-bonded. Residues 582-602 (VLITMTVALAYIVLVVGLMLW) traverse the membrane as a helical segment. Topologically, residues 603–1033 (CRYRRQARKA…LSKAMQSAEK (431 aa)) are cytoplasmic. Disordered regions lie at residues 617–679 (LSTK…KKSA) and 718–760 (SPSD…KTSM). The span at 655 to 673 (KSSGDAQKSDDTACSQQSR) shows a compositional bias: polar residues. Serine 678 is modified (phosphoserine). The 337-residue stretch at 692–1028 (LSELIQIGRG…QLGAALSKAM (337 aa)) folds into the Protein kinase; inactive domain. Basic and acidic residues predominate over residues 720–731 (SDKDADTEKQHS).

This sequence belongs to the protein kinase superfamily. Tyr protein kinase family. Insulin receptor subfamily. In terms of assembly, interacts with plexA; component of a receptor complex that mediates the repulsive signaling in response to Semaphorin ligands. As to expression, dynamically expressed during embryogenesis in several areas of the developing nervous system, including neurons and fasciculating axons. Expression in stage 7 embryos is seen in the anterior midgut primordia, cephalic furrow and along the germinal band. At stage 11, expression is in 15 stripes over the trunk region, and in the anterior and posterior midgut primordia. Stage 12 shows expression in the developing nervous system, procephalic lobe and maxillar bud. Stage 13 shows expression in the ventral cord, maxillar segment and in three regions of the gut. At stage 16 expression is preferentially detected throughout the nervous system, including the neuromers in the ventral cord and the supraesophageal ganglion (at protein level). In larva, expression is seen in developing R cells and is localized predominantly to R1-R6 growth cones.

Its subcellular location is the cell membrane. Acts as a calcium-dependent, homophilic cell adhesion molecule that regulates neural recognition during the development of the nervous system. Component of the repulsive Plexin signaling response to regulate motor axon guidance at the embryonic stage. Also component of a receptor complex that is required in the adult visual system to innervate the lamina layer; specific targeting of R1-R6 axons. This Drosophila melanogaster (Fruit fly) protein is Tyrosine-protein kinase-like otk.